Reading from the N-terminus, the 593-residue chain is MKISVGLYGTNAHQIALAMIQGFNKHYTLFRQTSREAKTRFEQADWLGVHKAVKERIRFYDDRVDECVERLRNQFDAASIDDTTWQQVKLLYIGLLLNHKQPELAETFFNSVTTKILHRNYFHNDFIFVRPSISTENIEGDDTQTYRSYYAKEDGLRGTVLKIVKDFDWHRPFVDLEHDVEHVYHAVRHFLNGMPPREVNFQIQVLGSAFYRNKAAYIIGKAINGATEYPFTIPVLQNEAGQLYLDTILLDAWRIGLLFSLSRAYFMVDMEVPSGYVQFLRSILPAKPRSELYIMLGLGKQGKTMFFRDLIYHLHHSEDKFIMAPGIRGLVMLVFTLPSYPYVFKLIKDVFGSSKEMDRATVKKKFMMVKQVDRVGRMADTLEFSNVMFPLKRFNDEVLAELQQLAPSCFEVDGDQLIIKHLYIERRMEPLNIHLDRMERANNVERLEHVIREYGSAIREMAQANIFPGDMLWKNFGVTRFGRVVFYDYDEIEYMTDIKFRQIPPAPDFETEMSGEVWYAVSRNDVFPEEFATFLLTSPQVRKIFIKYHKDLLSPRFWLEAQEKIRSGYVEDFFPYPQELRFINRQTDLTEEQ.

Residues 324 to 330 (APGIRGL) and K345 contribute to the ATP site. The active site involves D380.

It belongs to the AceK family.

It is found in the cytoplasm. The catalysed reaction is L-seryl-[isocitrate dehydrogenase] + ATP = O-phospho-L-seryl-[isocitrate dehydrogenase] + ADP + H(+). Functionally, bifunctional enzyme which can phosphorylate or dephosphorylate isocitrate dehydrogenase (IDH) on a specific serine residue. This is a regulatory mechanism which enables bacteria to bypass the Krebs cycle via the glyoxylate shunt in response to the source of carbon. When bacteria are grown on glucose, IDH is fully active and unphosphorylated, but when grown on acetate or ethanol, the activity of IDH declines drastically concomitant with its phosphorylation. In Dechloromonas aromatica (strain RCB), this protein is Isocitrate dehydrogenase kinase/phosphatase.